Reading from the N-terminus, the 377-residue chain is Flap endonuclease 1 (377 aa).

The tract at residues 1–105 (MGIKGLSQVI…GELAKRASRQ (105 aa)) is N-domain. Asp34 is a binding site for Mg(2+). Arg47 and Arg71 together coordinate DNA. Residue Asp87 participates in Mg(2+) binding. The interval 96–115 (GELAKRASRQQKAREEREEA) is disordered. The segment at 123-254 (MVDKFAKRTV…ARAVELIRQH (132 aa)) is I-domain. Mg(2+) is bound by residues Glu159, Glu161, Asp180, and Asp182. Residue Glu159 coordinates DNA. The DNA site is built by Gly232 and Asp234. Asp234 lines the Mg(2+) pocket. An interaction with PCNA region spans residues 337–345 (PQGRLDSFF). Positions 350 to 377 (STKKEKEKPKAAAKRKRDTKSSAPKKKR) are disordered. A compositionally biased stretch (basic residues) spans 360–377 (AAAKRKRDTKSSAPKKKR).

Belongs to the XPG/RAD2 endonuclease family. FEN1 subfamily. In terms of assembly, interacts with PCNA. Three molecules of rad2 bind to one PCNA trimer with each molecule binding to one PCNA monomer. PCNA stimulates the nuclease activity without altering cleavage specificity. Mg(2+) is required as a cofactor. Post-translationally, phosphorylated. Phosphorylation upon DNA damage induces relocalization to the nuclear plasma.

It localises to the nucleus. The protein resides in the nucleolus. The protein localises to the nucleoplasm. Its subcellular location is the mitochondrion. In terms of biological role, structure-specific nuclease with 5'-flap endonuclease and 5'-3' exonuclease activities involved in DNA replication and repair. During DNA replication, cleaves the 5'-overhanging flap structure that is generated by displacement synthesis when DNA polymerase encounters the 5'-end of a downstream Okazaki fragment. It enters the flap from the 5'-end and then tracks to cleave the flap base, leaving a nick for ligation. Also involved in the long patch base excision repair (LP-BER) pathway, by cleaving within the apurinic/apyrimidinic (AP) site-terminated flap. Acts as a genome stabilization factor that prevents flaps from equilibrating into structures that lead to duplications and deletions. Also possesses 5'-3' exonuclease activity on nicked or gapped double-stranded DNA, and exhibits RNase H activity. Also involved in replication and repair of rDNA and in repairing mitochondrial DNA. This chain is Flap endonuclease 1, found in Schizosaccharomyces japonicus (strain yFS275 / FY16936) (Fission yeast).